Here is a 404-residue protein sequence, read N- to C-terminus: Argininosuccinate synthase (404 aa).

ATP-binding positions include Ala10–Ser18 and Ala38. Residue Tyr89 participates in L-citrulline binding. Gly119 is a binding site for ATP. Residues Thr121, Asn125, and Asp126 each coordinate L-aspartate. Residue Asn125 participates in L-citrulline binding. L-citrulline-binding residues include Arg129, Ser177, Ser186, Glu262, and Tyr274.

It belongs to the argininosuccinate synthase family. Type 1 subfamily. Homotetramer.

It localises to the cytoplasm. The catalysed reaction is L-citrulline + L-aspartate + ATP = 2-(N(omega)-L-arginino)succinate + AMP + diphosphate + H(+). The protein operates within amino-acid biosynthesis; L-arginine biosynthesis; L-arginine from L-ornithine and carbamoyl phosphate: step 2/3. This Prochlorococcus marinus subsp. pastoris (strain CCMP1986 / NIES-2087 / MED4) protein is Argininosuccinate synthase.